We begin with the raw amino-acid sequence, 156 residues long: Terrestric acid biosynthesis cluster protein E (156 aa).

It participates in secondary metabolite biosynthesis. Functionally, part of the tra gene cluster that produces terrestric acid. The clavatol biosynthesis cluster cla and the terrestric acid cluster tra are both involved in the production of peniphenones and penilactones. The non-reducing PKS claF is responsible for the formation of clavatol from successive condensations of 3 malonyl-CoA units, presumably with a simple acetyl-CoA starter unit, and 2 methylation steps. The esterase claE probably collaborates with claF by catalyzing the hydrolysis of ACP-bound acyl intermediates to free the ACP from stalled intermediates. The clavatol oxidase claD then converts clavatol to hydroxyclavatol. Spontaneous dehydration of hydroxyclavatol leads to the accumulation of the highly active ortho-quinone methide. On the other hand, the PKS-NRPS hybrid traA is involved in the formation of crustosic acid, with the help of traB and traD. The polyketide synthase module (PKS) of traA is responsible for the synthesis of the polyketide backbone via the condensation of an acetyl-CoA starter unit with 3 malonyl-CoA units. The downstream nonribosomal peptide synthetase (NRPS) module then amidates the carboxyl end of the polyketide with L-malic acid. Because traA lacks a designated enoylreductase (ER) domain, the required activity is provided the enoyl reductase traG. Crustosic acid undergoes decarboxylation and isomerization to the terrestric acid, catalyzed by the 2-oxoglutarate-dependent dioxygenase traH. Both acids are further converted to the 2 gamma-butyrolactones (R)-5-methyltetronic acid and (S)-5-carboxylmethyltetronic acid, with involvement of the cytochrome P450 monooxygenase claJ. Spontaneous addition of the methide to these gamma-butyrolactones leads to peniphenone D and penilactone D, which undergo again stereospecific attacking by methide to give penilactones A and B. TraE seems not to be involved in the biosynthesis of peniphenones and penilactones in the conditions used to study its function. This chain is Terrestric acid biosynthesis cluster protein E, found in Penicillium crustosum (Blue mold fungus).